The sequence spans 306 residues: MTNEFLHFEKISRQTWQSLHRKTTPPLTEEELESIKSFNDQISLQDVTDIYLPLAHLIQIYKRTKEDLAFSKGIFLQRESKSQPFIIGVSGSVAVGKSTTSRLLQILLSRTFTDATVELVTTDGFLYPNQTLIEQGILNRKGFPESYNMEALLNFLDRIKNGQDVDIPVYSHEVYDIVPEEKQSVKAADFVIVEGINVFQNPQNDRLYITDFFDFSIYVDAGVDDIESWYLDRFLKMLSLAQNDPDSYYYRFTQMPIGEVEAFAHQVWTSINLTNLQNYIEPTRNRAEVILHKSKNHEIDEIYLKK.

91–98 (GSVAVGKS) contributes to the ATP binding site.

This sequence belongs to the prokaryotic pantothenate kinase family.

It localises to the cytoplasm. It carries out the reaction (R)-pantothenate + ATP = (R)-4'-phosphopantothenate + ADP + H(+). The protein operates within cofactor biosynthesis; coenzyme A biosynthesis; CoA from (R)-pantothenate: step 1/5. The protein is Pantothenate kinase of Streptococcus pneumoniae (strain 70585).